A 283-amino-acid chain; its full sequence is MKQYLQLCQRIVDEGQWVENKRTGTRCLTVINADLEYDVANNQFPMITTRKSYYKAAIAELLGYLRGYDSAAQFREIGCKTWDANANENSAWLNNPHRKGEDDMGRVYGVQGRAWQRPDGSTLDQLAKVINNLKNGIDDRGEIISFYNPGEFELGCLRPCMHTHTFSLLGDTLYLTSIQRSCDVPLGLNFNQIQCFVLLALVAQITGHKAGKAYHKITNAHIYENQLELMRDVQLKREPFASPQLKINPNIKSLNDIETWVTRDDFEVTGYECHEAIQYPFSV.

Residue R22 coordinates dUMP. C160 acts as the Nucleophile in catalysis. DUMP is bound by residues 180–183 (RSCD), N191, and 221–223 (HIY). (6R)-5,10-methylene-5,6,7,8-tetrahydrofolate is bound at residue D183. S282 is a (6R)-5,10-methylene-5,6,7,8-tetrahydrofolate binding site.

The protein belongs to the thymidylate synthase family. Bacterial-type ThyA subfamily. Homodimer.

Its subcellular location is the cytoplasm. It carries out the reaction dUMP + (6R)-5,10-methylene-5,6,7,8-tetrahydrofolate = 7,8-dihydrofolate + dTMP. It functions in the pathway pyrimidine metabolism; dTTP biosynthesis. In terms of biological role, catalyzes the reductive methylation of 2'-deoxyuridine-5'-monophosphate (dUMP) to 2'-deoxythymidine-5'-monophosphate (dTMP) while utilizing 5,10-methylenetetrahydrofolate (mTHF) as the methyl donor and reductant in the reaction, yielding dihydrofolate (DHF) as a by-product. This enzymatic reaction provides an intracellular de novo source of dTMP, an essential precursor for DNA biosynthesis. This is Thymidylate synthase from Pseudoalteromonas translucida (strain TAC 125).